A 419-amino-acid polypeptide reads, in one-letter code: UDP-N-acetylglucosamine 1-carboxyvinyltransferase (419 aa).

Phosphoenolpyruvate is bound at residue 22–23 (KN). Position 93 (Arg93) interacts with UDP-N-acetyl-alpha-D-glucosamine. Catalysis depends on Cys117, which acts as the Proton donor. 2-(S-cysteinyl)pyruvic acid O-phosphothioketal is present on Cys117. UDP-N-acetyl-alpha-D-glucosamine-binding positions include 122 to 126 (RPVDL), Asp308, and Ile330.

It belongs to the EPSP synthase family. MurA subfamily.

Its subcellular location is the cytoplasm. The enzyme catalyses phosphoenolpyruvate + UDP-N-acetyl-alpha-D-glucosamine = UDP-N-acetyl-3-O-(1-carboxyvinyl)-alpha-D-glucosamine + phosphate. The protein operates within cell wall biogenesis; peptidoglycan biosynthesis. In terms of biological role, cell wall formation. Adds enolpyruvyl to UDP-N-acetylglucosamine. The sequence is that of UDP-N-acetylglucosamine 1-carboxyvinyltransferase from Pseudomonas putida (Arthrobacter siderocapsulatus).